The sequence spans 59 residues: Large ribosomal subunit protein bL32 (59 aa).

Belongs to the bacterial ribosomal protein bL32 family. Part of the 50S ribosomal subunit.

This Bacillus subtilis (strain 168) protein is Large ribosomal subunit protein bL32 (rpmF).